Consider the following 500-residue polypeptide: MLTIFIVTATLFAILYFYFTRNFNYWKDRNVVGPEPTVFFGNIMESVIRRKHLIMIYKDIYEAFPKEKVVGIYRMTTPCLLLRDLDVIKHVMIKDFDLFNDRGVEFSEEGLGLNIFHADGDRWRVLRQCFTPLFTSGKLKNMLNLMSDRGDKFIKMVEKFCDKEPEQQIIPLVRKFTMASITTCAFGMELDEEMIETLDKLDSLIFTTSYGNEIDMMYPGILKKLNSSIFSKMIAPFFDNLTKTIIEQRGGKPTNRKDLMDLILELRQKKAIEPMKKTHDEQVTTLELTDSVIAAQTFIFYAAGYETSASTMSFLLFELAENPDIQEKVIAEVDETLKRHNGEITYDTLSEMTYLTQVFHETLRKYPVADILLRNAKADYAVPGTNVTLKKGQTVVVSGFGIHYDPKYYPDPEKFDPERFSPENVRNRHPCAYIPFGAGQRKCLGMRFGQWQVQVCIIKLLSKFRFEPSTKTMSEFNYDPKRLLVYPKSGIFLNIIPRNY.

Cysteine 443 contacts heme.

The protein belongs to the cytochrome P450 family. Heme serves as cofactor.

It localises to the endoplasmic reticulum membrane. The protein resides in the microsome membrane. The enzyme catalyses an organic molecule + reduced [NADPH--hemoprotein reductase] + O2 = an alcohol + oxidized [NADPH--hemoprotein reductase] + H2O + H(+). In terms of biological role, enables the insect to feed on furanocoumarin-producing plants and evolved as an adaptation for detoxification of xanthotoxin and other furanocoumarins. This isozyme metabolizes isopimpinellin, imperatorin, and bergapten at high rates, xanthotoxin and psoralen at intermediate rates and angelicin, sphondin, and trioxsalen only at very low rates. The sequence is that of Cytochrome P450 6B4 (CYP6B4) from Papilio glaucus (Eastern tiger swallowtail butterfly).